The following is a 102-amino-acid chain: Acid shock protein (102 aa).

Positions 1-21 (MKKVLALVVAAAMGLSSAAFA) are cleaved as a signal peptide. Residues 22-58 (AETAITPAPTATTTKAAPAKTTHHKKQHKAAPAQKAQ) constitute a propeptide that is removed on maturation. Residues 26 to 41 (ITPAPTATTTKAAPAK) show a composition bias toward low complexity. The segment at 26–102 (ITPAPTATTT…PAKPAAQPAA (77 aa)) is disordered. Positions 80–90 (AAKKHAKKHSH) are enriched in basic residues. Residues 91–102 (QQPAKPAAQPAA) are compositionally biased toward low complexity.

Belongs to the Asr family. Proteolytic processing gives rise to the active protein.

The protein localises to the periplasm. Its function is as follows. Required for growth and/or survival at acidic conditions. This Escherichia coli O81 (strain ED1a) protein is Acid shock protein.